The sequence spans 48 residues: ATP synthase protein 8 (48 aa).

Residues 4–24 (LVPFYFINILSFGFLIFTVLL) form a helical membrane-spanning segment.

The protein belongs to the ATPase protein 8 family. F-type ATPases have 2 components, CF(1) - the catalytic core - and CF(0) - the membrane proton channel.

The protein resides in the mitochondrion membrane. Mitochondrial membrane ATP synthase (F(1)F(0) ATP synthase or Complex V) produces ATP from ADP in the presence of a proton gradient across the membrane which is generated by electron transport complexes of the respiratory chain. F-type ATPases consist of two structural domains, F(1) - containing the extramembraneous catalytic core and F(0) - containing the membrane proton channel, linked together by a central stalk and a peripheral stalk. During catalysis, ATP synthesis in the catalytic domain of F(1) is coupled via a rotary mechanism of the central stalk subunits to proton translocation. Part of the complex F(0) domain. Minor subunit located with subunit a in the membrane. The sequence is that of ATP synthase protein 8 (atp8) from Schizosaccharomyces pombe (strain 972 / ATCC 24843) (Fission yeast).